Consider the following 572-residue polypeptide: Potassium-transporting ATPase potassium-binding subunit (572 aa).

Transmembrane regions (helical) follow at residues 6-26, 66-86, 135-155, 177-197, 251-271, 283-303, 382-402, 428-448, 493-513, and 537-557; these read ILFV…GTYI, FFSL…VLLL, ALAV…IVLI, IFWI…FQGV, TIIT…ALTY, GWMI…VMTI, IFGG…LAVF, MFAL…AAVI, ITIA…VMML, and FIFS…TIFP.

Belongs to the KdpA family. As to quaternary structure, the system is composed of three essential subunits: KdpA, KdpB and KdpC.

It localises to the cell inner membrane. Functionally, part of the high-affinity ATP-driven potassium transport (or Kdp) system, which catalyzes the hydrolysis of ATP coupled with the electrogenic transport of potassium into the cytoplasm. This subunit binds the periplasmic potassium ions and delivers the ions to the membrane domain of KdpB through an intramembrane tunnel. The polypeptide is Potassium-transporting ATPase potassium-binding subunit (Francisella philomiragia subsp. philomiragia (strain ATCC 25017 / CCUG 19701 / FSC 153 / O#319-036)).